The chain runs to 347 residues: Purine-rich element-binding protein gamma (347 aa).

2 disordered regions span residues 1–34 (MERA…YPQA) and 133–169 (GHRQ…HPHS). Residues 9–24 (GGGGRGRGGKNVGGSG) are compositionally biased toward gly residues. Residues 51–293 (AGGAAEIQEL…GIFLKVSEVR (243 aa)) mediate DNA binding. Positions 134 to 146 (HRQEHGHSKEQGS) are enriched in basic and acidic residues. Residues S160, S163, and S339 each carry the phosphoserine modification.

The protein belongs to the PUR DNA-binding protein family. In terms of tissue distribution, isoform 1 is expressed in testis and glioblastoma. Isoform 2 is expressed in fetal lung.

It localises to the nucleus. The polypeptide is Purine-rich element-binding protein gamma (PURG) (Homo sapiens (Human)).